The primary structure comprises 308 residues: Ribonuclease HIII (308 aa).

Residues 91 to 308 form the RNase H type-2 domain; that stretch reads KNVIGSDEVG…TEKALKMVKK (218 aa). 3 residues coordinate a divalent metal cation: D97, E98, and D202.

The protein belongs to the RNase HII family. RnhC subfamily. Requires Mn(2+) as cofactor. Mg(2+) is required as a cofactor.

It localises to the cytoplasm. The enzyme catalyses Endonucleolytic cleavage to 5'-phosphomonoester.. Endonuclease that specifically degrades the RNA of RNA-DNA hybrids. This is Ribonuclease HIII from Listeria monocytogenes serovar 1/2a (strain ATCC BAA-679 / EGD-e).